A 541-amino-acid polypeptide reads, in one-letter code: Apolipoprotein N-acyltransferase (541 aa).

6 helical membrane passes run 21–41, 54–74, 89–109, 116–136, 157–177, and 189–209; these read MSWFFSLLGSAVGYGLLWYSL, LTSLLFLWSVTVYGVHFSWML, VLISLLALLFTAFSCLLFFIV, ILWCLPGLWVAVEMVRFYFLC, FGGFFGWAGESFILVATGISF, and YVWLGCLLFPYILGGVHYEYL. The CN hydrolase domain occupies 219–500; that stretch reads LRVAVIQPAS…PGVLQVSLPM (282 aa). Glu-265 functions as the Proton acceptor in the catalytic mechanism. Lys-350 is an active-site residue. Cys-405 (nucleophile) is an active-site residue. The chain crosses the membrane as a helical span at residues 506-526; the sequence is LYAFWGDFPMIFLSLLSIGCI.

This sequence belongs to the CN hydrolase family. Apolipoprotein N-acyltransferase subfamily.

The protein localises to the cell inner membrane. The enzyme catalyses N-terminal S-1,2-diacyl-sn-glyceryl-L-cysteinyl-[lipoprotein] + a glycerophospholipid = N-acyl-S-1,2-diacyl-sn-glyceryl-L-cysteinyl-[lipoprotein] + a 2-acyl-sn-glycero-3-phospholipid + H(+). It participates in protein modification; lipoprotein biosynthesis (N-acyl transfer). Functionally, catalyzes the phospholipid dependent N-acylation of the N-terminal cysteine of apolipoprotein, the last step in lipoprotein maturation. In Chlamydia caviae (strain ATCC VR-813 / DSM 19441 / 03DC25 / GPIC) (Chlamydophila caviae), this protein is Apolipoprotein N-acyltransferase.